A 462-amino-acid polypeptide reads, in one-letter code: A-type ATP synthase subunit B (462 aa).

This sequence belongs to the ATPase alpha/beta chains family. As to quaternary structure, has multiple subunits with at least A(3), B(3), C, D, E, F, H, I and proteolipid K(x).

Its subcellular location is the cell membrane. Component of the A-type ATP synthase that produces ATP from ADP in the presence of a proton gradient across the membrane. The B chain is a regulatory subunit. In Pyrococcus furiosus (strain ATCC 43587 / DSM 3638 / JCM 8422 / Vc1), this protein is A-type ATP synthase subunit B.